A 391-amino-acid chain; its full sequence is MGEENQPNYTISQENWSLHRKGYDDQQRHQEKVQEAIKNNLPDLVTEESIVMSNGKDVVKIPIRSLDEYKIRYNYDKNKHVGQGNGDSKVGDVVARDGSGGQKQKGPGKGQGAGDAAGEDYYEAEVSILELEQAFFRELELPNLKRKEIDENRIEHVEFNDIRKTGLWGNIDKKRTMISAYKRNAMRGKASFHPIHQEDLKFRTWNEVLKPDSKAVVLAMMDTSGSMGMWEKYMARSFFFWMTRFLRTKYETVDIEFIAHHTEAKVVTEEEFFSKGESGGTICSSVYKKALELIDNKYSPDRYNIYPFHFSDGDNLTSDNARCVKLVEELMKKCNMFGYGEVNQYNRHSTLMSAYKNIKDENFRYYILKQKADVFHAMKSFFREESGEKMA.

The segment covering Met-1–Trp-16 has biased composition (polar residues). Disordered regions lie at residues Met-1 to Glu-31 and His-80 to Ala-117. Residues Lys-21–Glu-31 show a composition bias toward basic and acidic residues. Positions Gly-98–Asp-115 are enriched in gly residues.

Belongs to the UPF0229 family.

The protein is UPF0229 protein BCG9842_B4751 of Bacillus cereus (strain G9842).